The following is a 150-amino-acid chain: Protein Smg homolog (150 aa).

It belongs to the Smg family.

In Methylibium petroleiphilum (strain ATCC BAA-1232 / LMG 22953 / PM1), this protein is Protein Smg homolog.